The primary structure comprises 77 residues: Putative defensin-like protein 120 (77 aa).

The first 26 residues, 1–26, serve as a signal peptide directing secretion; it reads MTQKATILAIFMVVLVLGLETKETQG. 4 cysteine pairs are disulfide-bonded: Cys30–Cys75, Cys39–Cys60, Cys44–Cys69, and Cys48–Cys71.

Belongs to the DEFL family.

It is found in the secreted. This Arabidopsis thaliana (Mouse-ear cress) protein is Putative defensin-like protein 120 (LCR56).